We begin with the raw amino-acid sequence, 177 residues long: Mitochondrial inner membrane protease subunit 2 (177 aa).

Residues Ser41 and Lys91 contribute to the active site. A helical transmembrane segment spans residues 134–152 (TFGPISSGLVIGKAITIVW).

Belongs to the peptidase S26 family. IMP2 subfamily. Component of the mitochondrial inner membrane peptidase (IMP) complex which at least consists of IMP1, IMP2 and SOM1. The N-terminus is blocked.

It localises to the mitochondrion inner membrane. Catalytic component of the mitochondrial inner membrane peptidase (IMP) complex. IMP catalyzes the removal of signal peptides required for the targeting of proteins from the mitochondrial matrix, across the inner membrane, into the inter-membrane space. The two catalytic IMP subunits seem to have non-overlapping substrate specificities. IMP2 substrates include nuclear encoded CYB2, mitochondrially encoded COX2 and cytochrome c1. Required for the stability of IMP1. The protein is Mitochondrial inner membrane protease subunit 2 (IMP2) of Saccharomyces cerevisiae (strain ATCC 204508 / S288c) (Baker's yeast).